We begin with the raw amino-acid sequence, 216 residues long: UPF0502 protein Spea_2482 (216 aa).

The protein belongs to the UPF0502 family.

In Shewanella pealeana (strain ATCC 700345 / ANG-SQ1), this protein is UPF0502 protein Spea_2482.